Consider the following 104-residue polypeptide: Large ribosomal subunit protein bL21 (104 aa).

The protein belongs to the bacterial ribosomal protein bL21 family. In terms of assembly, part of the 50S ribosomal subunit. Contacts protein L20.

In terms of biological role, this protein binds to 23S rRNA in the presence of protein L20. This Streptococcus mutans serotype c (strain ATCC 700610 / UA159) protein is Large ribosomal subunit protein bL21.